The chain runs to 1690 residues: rRNA biogenesis protein rrp5 (1690 aa).

Disordered regions lie at residues 1 to 42 and 59 to 90; these read MAGN…GASS and FMES…ELDN. Positions 11 to 32 are enriched in polar residues; sequence ASEGSDSQGNERISSLSANEAT. A compositionally biased stretch (basic residues) spans 72–83; sequence KTRPKKKGSKKS. S1 motif domains are found at residues 109 to 209, 226 to 289, 306 to 376, 398 to 473, 490 to 559, 579 to 648, 666 to 739, 761 to 830, 866 to 942, 973 to 1044, 1053 to 1122, 1147 to 1216, and 1236 to 1307; these read GSLI…LSLK, GSMI…LTAT, GDYI…VSFL, GFIV…LSFQ, GQFV…LTLK, GTQT…VGCR, GSVL…LSLK, GIKY…MSFK, GKIT…ISHR, GDEV…IGPL, GSRL…LSAR, GDIC…MSLK, and GSNL…LGLK. Residues 1313-1424 form a disordered region; that stretch reads SDSDISMSDN…EEKDLDEIPS (112 aa). Acidic residues-rich tracts occupy residues 1348–1367, 1390–1400, and 1412–1421; these read QSEE…EEEP, DTEDSEDEEDE, and FDDEEKDLDE. Thr-1391 is subject to Phosphothreonine. Phosphoserine is present on Ser-1394. HAT repeat units follow at residues 1420-1452, 1526-1558, and 1596-1628; these read DEIP…YHLN, GKVD…FLLN, and GDPE…MEMK. Ser-1684 and Ser-1686 each carry phosphoserine.

As to quaternary structure, component of the ribosomal small subunit (SSU) processome.

It is found in the nucleus. It localises to the nucleolus. In terms of biological role, involved in the biogenesis of rRNA. Required for the formation of 18S and 5.8S rRNA. The polypeptide is rRNA biogenesis protein rrp5 (Schizosaccharomyces pombe (strain 972 / ATCC 24843) (Fission yeast)).